Here is a 541-residue protein sequence, read N- to C-terminus: Light-independent protochlorophyllide reductase subunit B (541 aa).

A [4Fe-4S] cluster-binding site is contributed by aspartate 36. The active-site Proton donor is the aspartate 287. 422-423 (GL) serves as a coordination point for substrate.

The protein belongs to the ChlB/BchB/BchZ family. In terms of assembly, protochlorophyllide reductase is composed of three subunits; BchL, BchN and BchB. Forms a heterotetramer of two BchB and two BchN subunits. Requires [4Fe-4S] cluster as cofactor.

The enzyme catalyses chlorophyllide a + oxidized 2[4Fe-4S]-[ferredoxin] + 2 ADP + 2 phosphate = protochlorophyllide a + reduced 2[4Fe-4S]-[ferredoxin] + 2 ATP + 2 H2O. Its pathway is porphyrin-containing compound metabolism; bacteriochlorophyll biosynthesis (light-independent). In terms of biological role, component of the dark-operative protochlorophyllide reductase (DPOR) that uses Mg-ATP and reduced ferredoxin to reduce ring D of protochlorophyllide (Pchlide) to form chlorophyllide a (Chlide). This reaction is light-independent. The NB-protein (BchN-BchB) is the catalytic component of the complex. This is Light-independent protochlorophyllide reductase subunit B from Rhodopseudomonas palustris (strain HaA2).